The chain runs to 180 residues: Peptide deformylase (180 aa).

C96 and H138 together coordinate Fe cation. The active site involves E139. H142 is a binding site for Fe cation.

It belongs to the polypeptide deformylase family. It depends on Fe(2+) as a cofactor.

The enzyme catalyses N-terminal N-formyl-L-methionyl-[peptide] + H2O = N-terminal L-methionyl-[peptide] + formate. Removes the formyl group from the N-terminal Met of newly synthesized proteins. Requires at least a dipeptide for an efficient rate of reaction. N-terminal L-methionine is a prerequisite for activity but the enzyme has broad specificity at other positions. This chain is Peptide deformylase, found in Rhodopseudomonas palustris (strain BisA53).